Consider the following 146-residue polypeptide: Stress-responsive DNAJB4-interacting membrane protein 1 (146 aa).

Residues 1 to 26 (MWPAPCSVGRLLIFFMCSSSGYVVQG) form the signal peptide. Over 27–66 (CGPSPGARTTLGSPLSLWSIKTPSHIFCTRRAINLGFPSP) the chain is Extracellular. The helical transmembrane segment at 67–87 (PLVQLIFWSLNAGLDLYLCLI) threads the bilayer. The Cytoplasmic portion of the chain corresponds to 88–94 (SSCGFSQ). The helical transmembrane segment at 95-115 (VFWPVEAFCSFSLSFFALALS) threads the bilayer. Over 116–146 (HKFVICRLDQHIFSGFTKSLKNLPPCHRTDI) the chain is Extracellular.

Homodimer. Interacts with DNAJB4. In terms of tissue distribution, expressed in brain with higher detection in neurons than astrocytes. Decreased expression in Alzheimer brains. Detected at protein level in brain and cervix.

The protein resides in the membrane. Functionally, promotes neuronal cells survival to stress conditions. This is Stress-responsive DNAJB4-interacting membrane protein 1 (SDIM1) from Homo sapiens (Human).